The primary structure comprises 353 residues: Heterogeneous nuclear ribonucleoproteins A2/B1 (353 aa).

An N-acetylmethionine modification is found at M1. The residue at position 4 (T4) is a Phosphothreonine. L5 participates in a covalent cross-link: Glycyl lysine isopeptide (Lys-Gly) (interchain with G-Cter in SUMO2). The short motif at 9-15 is the Nuclear localization signal element; sequence PLERKKR. 2 consecutive RRM domains span residues 21–104 and 112–191; these read RKLF…ESGK and KKLF…LSRQ. A Glycyl lysine isopeptide (Lys-Gly) (interchain with G-Cter in SUMO2) cross-link involves residue K22. S29 is subject to Phosphoserine. At R38 the chain carries Omega-N-methylarginine. At S85 the chain carries Phosphoserine. Residue K104 is modified to N6,N6-dimethyllysine; alternate. A Glycyl lysine isopeptide (Lys-Gly) (interchain with G-Cter in SUMO2); alternate cross-link involves residue K104. Glycyl lysine isopeptide (Lys-Gly) (interchain with G-Cter in SUMO2) cross-links involve residues K112, K120, and K137. T140 carries the post-translational modification Phosphothreonine. Phosphoserine is present on S149. K152 participates in a covalent cross-link: Glycyl lysine isopeptide (Lys-Gly) (interchain with G-Cter in SUMO2). Position 159 is a phosphothreonine (T159). Residues K168 and K173 each participate in a glycyl lysine isopeptide (Lys-Gly) (interchain with G-Cter in SUMO2); alternate cross-link. Residues K168 and K173 each carry the N6-acetyllysine; alternate modification. T176 carries the post-translational modification Phosphothreonine. K186 is covalently cross-linked (Glycyl lysine isopeptide (Lys-Gly) (interchain with G-Cter in SUMO2)). Phosphoserine is present on residues S189 and S201. The tract at residues 193–353 is disordered; it reads MQEVQSSRSG…SGGYGGRSRY (161 aa). Gly residues predominate over residues 202–223; sequence GRGGNFGFGDSRGGGGNFGPGP. Asymmetric dimethylarginine; alternate is present on R203. Dimethylated arginine; alternate is present on R203. R203 carries the post-translational modification Omega-N-methylarginine; alternate. S212 carries the phosphoserine modification. R213 is subject to Asymmetric dimethylarginine; alternate. R213 is subject to Dimethylated arginine; alternate. R213 bears the Omega-N-methylarginine; alternate mark. S225 bears the Phosphoserine mark. R228 bears the Omega-N-methylarginine mark. Phosphoserine is present on residues S231 and S236. R238 bears the Omega-N-methylarginine mark. Residue S259 is modified to Phosphoserine. R266 is modified (asymmetric dimethylarginine; alternate). R266 bears the Omega-N-methylarginine; alternate mark. The segment at 308–347 is nuclear targeting sequence; sequence QQPSNYGPMKSGNFGGSRNMGGPYGGGNYGPGGSGGSGGY. A compositionally biased stretch (gly residues) spans 320–353; sequence NFGGSRNMGGPYGGGNYGPGGSGGSGGYGGRSRY. Residue S324 is modified to Phosphoserine. At R325 the chain carries Omega-N-methylarginine. At Y331 the chain carries Phosphotyrosine. A phosphoserine mark is found at S341 and S344. Residue Y347 is modified to Phosphotyrosine. At R350 the chain carries Omega-N-methylarginine.

As to quaternary structure, homodimer; dimerization is required for nucleocytoplasmic translocation. Identified in the spliceosome C complex. Identified in a IGF2BP1-dependent mRNP granule complex containing untranslated mRNAs. Interacts with IGF2BP1. Interacts with C9orf72. Interacts with DGCR8. Interacts with TARDBP. Interacts with CKAP5. Interacts with TBK1. Interacts with STING1. Interacts with SRC. Interacts with PPIA/CYPA. Interacts (via C-terminus) with FAM76B; the interaction results in retention of HNRNPA2B1 in the nucleus and inhibition of the NF-kappa-B-mediated inflammatory pathway. Interacts with NF-kappa-B inhibitors NFKBIA and NFKBIE; the interaction may be mediated by the RRM2 domain of HNRNPA2B1, and HNRNPA2B1 may interact simultaneously with FAM76B and either NFKBIA or NFKBIE to form a complex. Post-translationally, sumoylated in exosomes, promoting miRNAs-binding. In terms of processing, asymmetric dimethylation at Arg-266 constitutes the major methylation site. According to a report, methylation affects subcellular location and promotes nuclear localization. According to another report, methylation at Arg-266 does not influence nucleocytoplasmic shuttling.

The protein localises to the nucleus. It localises to the nucleoplasm. Its subcellular location is the cytoplasm. The protein resides in the cytoplasmic granule. It is found in the secreted. The protein localises to the extracellular exosome. Functionally, heterogeneous nuclear ribonucleoprotein (hnRNP) that associates with nascent pre-mRNAs, packaging them into hnRNP particles. The hnRNP particle arrangement on nascent hnRNA is non-random and sequence-dependent and serves to condense and stabilize the transcripts and minimize tangling and knotting. Packaging plays a role in various processes such as transcription, pre-mRNA processing, RNA nuclear export, subcellular location, mRNA translation and stability of mature mRNAs. Forms hnRNP particles with at least 20 other different hnRNP and heterogeneous nuclear RNA in the nucleus. Involved in transport of specific mRNAs to the cytoplasm in oligodendrocytes and neurons: acts by specifically recognizing and binding the A2RE (21 nucleotide hnRNP A2 response element) or the A2RE11 (derivative 11 nucleotide oligonucleotide) sequence motifs present on some mRNAs, and promotes their transport to the cytoplasm. Specifically binds single-stranded telomeric DNA sequences, protecting telomeric DNA repeat against endonuclease digestion. Also binds other RNA molecules, such as primary miRNA (pri-miRNAs): acts as a nuclear 'reader' of the N6-methyladenosine (m6A) mark by specifically recognizing and binding a subset of nuclear m6A-containing pri-miRNAs. Binding to m6A-containing pri-miRNAs promotes pri-miRNA processing by enhancing binding of DGCR8 to pri-miRNA transcripts. Involved in miRNA sorting into exosomes following sumoylation, possibly by binding (m6A)-containing pre-miRNAs. Acts as a regulator of efficiency of mRNA splicing, possibly by binding to m6A-containing pre-mRNAs. Plays a role in the splicing of pyruvate kinase PKM by binding repressively to sequences flanking PKM exon 9, inhibiting exon 9 inclusion and resulting in exon 10 inclusion and production of the PKM M2 isoform. Also plays a role in the activation of the innate immune response. Mechanistically, senses the presence of viral DNA in the nucleus, homodimerizes and is demethylated by JMJD6. In turn, translocates to the cytoplasm where it activates the TBK1-IRF3 pathway, leading to interferon alpha/beta production. In terms of biological role, (Microbial infection) Involved in the transport of HIV-1 genomic RNA out of the nucleus, to the microtubule organizing center (MTOC), and then from the MTOC to the cytoplasm: acts by specifically recognizing and binding the A2RE (21 nucleotide hnRNP A2 response element) sequence motifs present on HIV-1 genomic RNA, and promotes its transport. The chain is Heterogeneous nuclear ribonucleoproteins A2/B1 (HNRNPA2B1) from Homo sapiens (Human).